A 121-amino-acid polypeptide reads, in one-letter code: RATEKSVKTNGPLKQKQTTFSAKKVTEKTVKAKSSVPASDDNYPEIEKFFPFNPLDFESFDLPEEHQIAHLPLNGVPLMVLREERELEQLLHLGPPSPLNMPSPPWESDVLQSPSSILSTL.

Residues 1 to 24 (RATEKSVKTNGPLKQKQTTFSAKK) form a disordered region. 2 short sequence motifs (TEK-box) span residues 3-5 (TEK) and 26-28 (TEK). A disordered region spans residues 93 to 121 (LGPPSPLNMPSPPWESDVLQSPSSILSTL). Residues 95-105 (PPSPLNMPSPP) carry the SH3-binding motif. The segment covering 95–105 (PPSPLNMPSPP) has biased composition (pro residues). Serine 97 carries the post-translational modification Phosphoserine; by CDK1. Positions 110-121 (VLQSPSSILSTL) are enriched in polar residues.

It belongs to the securin family. In terms of assembly, interacts with the caspase-like ESPL1, and prevents its protease activity probably by covering its active site. Interacts with p53/TP53 and blocks its activity probably by blocking its binding to DNA. Interacts with the Ku 70 kDa subunit of ds-DNA kinase. Interacts with PTTG1IP. Interacts with RPS10 and DNAJA1. Phosphorylated by CDK1 during mitosis. Post-translationally, phosphorylated in vitro by ds-DNA kinase. In terms of processing, ubiquitinated through 'Lys-11' linkage of ubiquitin moieties by the anaphase promoting complex (APC) at the onset of anaphase, conducting to its degradation. 'Lys-11'-linked ubiquitination is mediated by the E2 ligase UBE2C/UBCH10.

The protein resides in the cytoplasm. It localises to the nucleus. In terms of biological role, regulatory protein, which plays a central role in chromosome stability, in the p53/TP53 pathway, and DNA repair. Probably acts by blocking the action of key proteins. During the mitosis, it blocks Separase/ESPL1 function, preventing the proteolysis of the cohesin complex and the subsequent segregation of the chromosomes. At the onset of anaphase, it is ubiquitinated, conducting to its destruction and to the liberation of ESPL1. Its function is however not limited to a blocking activity, since it is required to activate ESPL1. Negatively regulates the transcriptional activity and related apoptosis activity of p53/TP53. The negative regulation of p53/TP53 may explain the strong transforming capability of the protein when it is overexpressed. May also play a role in DNA repair via its interaction with Ku, possibly by connecting DNA damage-response pathways with sister chromatid separation. The chain is Securin (PTTG1) from Sus scrofa (Pig).